The following is a 323-amino-acid chain: Olfactory receptor 4K5 (323 aa).

The Extracellular portion of the chain corresponds to 1–25 (MDKSNSSVVSEFVLLGLCSSQKLQL). Residue Asn-5 is glycosylated (N-linked (GlcNAc...) asparagine). A helical membrane pass occupies residues 26 to 49 (FYFCFFSVLYTVIVLGNLLIILTV). Residues 50–57 (TSDTSLHS) are Cytoplasmic-facing. A helical membrane pass occupies residues 58–79 (PMYFLLGNLSFVDICQASFATP). Residues 80–100 (KMIADFLSAHETISFSGCIAQ) are Extracellular-facing. Cysteines 97 and 189 form a disulfide. A helical membrane pass occupies residues 101 to 120 (IFFIHLFTGGEMVLLVSMAY). The Cytoplasmic segment spans residues 121–139 (DRYVAICKPLYYVVIMSRR). The helical transmembrane segment at 140-158 (TCTVLVMISWAVSLVHTLS) threads the bilayer. Over 159–195 (QLSFTVNLPFCGPNVVDSFFCDLPRVTKLACLDSYII) the chain is Extracellular. A helical membrane pass occupies residues 196-219 (EILIVVNSGILSLSTFSLLVSSYI). At 220–235 (IILVTVWLKSSAAMAK) the chain is on the cytoplasmic side. Residues 236–258 (AFSTLASHIAVVILFFGPCIFIY) form a helical membrane-spanning segment. Topologically, residues 259–269 (VWPFTISPLDK) are extracellular. The chain crosses the membrane as a helical span at residues 270-289 (FLAIFYTVFTPVLNPIIYTL). Over 290-323 (RNRDMKAAVRKIVNHYLRPRRISEMSLVVRTSFH) the chain is Cytoplasmic.

The protein belongs to the G-protein coupled receptor 1 family.

The protein localises to the cell membrane. Functionally, odorant receptor. The sequence is that of Olfactory receptor 4K5 (OR4K5) from Homo sapiens (Human).